Reading from the N-terminus, the 127-residue chain is Large ribosomal subunit protein eL8 (127 aa).

Belongs to the eukaryotic ribosomal protein eL8 family. In terms of assembly, part of the 50S ribosomal subunit. Component of box C/D small ribonucleoprotein (sRNP) particles that contain rpl7ae, FlpA and nop5, plus a guide RNA. These sRNP particles form homodimers, giving rise to an asymmetric holoenzyme. Probably part of the RNase P complex.

Its subcellular location is the cytoplasm. Multifunctional RNA-binding protein that recognizes the K-turn motif in ribosomal RNA, the RNA component of RNase P, box H/ACA, box C/D and box C'/D' sRNAs. This is Large ribosomal subunit protein eL8 from Saccharolobus solfataricus (strain ATCC 35092 / DSM 1617 / JCM 11322 / P2) (Sulfolobus solfataricus).